The primary structure comprises 429 residues: Na(+)/H(+) antiporter NhaA 1 (429 aa).

The next 12 membrane-spanning stretches (helical) occupy residues 32–52 (ISGG…NSPW), 73–93 (LSVQ…VAGL), 111–131 (VVPV…YSLL), 140–160 (GWAI…AVVG), 170–190 (FLLT…AVAY), 193–213 (ELSV…TLLV), 219–239 (AWWL…ASGV), 243–263 (VAGV…AGGP), 284–304 (VAVP…LGGL), 316–336 (VVVG…WLVA), 349–369 (WVDV…SLLI), and 383–403 (HVKV…TVVL).

It belongs to the NhaA Na(+)/H(+) (TC 2.A.33) antiporter family.

The protein localises to the cell membrane. It catalyses the reaction Na(+)(in) + 2 H(+)(out) = Na(+)(out) + 2 H(+)(in). Na(+)/H(+) antiporter that extrudes sodium in exchange for external protons. The polypeptide is Na(+)/H(+) antiporter NhaA 1 (Frankia alni (strain DSM 45986 / CECT 9034 / ACN14a)).